The sequence spans 100 residues: Large ribosomal subunit protein uL23 (100 aa).

The protein belongs to the universal ribosomal protein uL23 family. As to quaternary structure, part of the 50S ribosomal subunit. Contacts protein L29, and trigger factor when it is bound to the ribosome.

Functionally, one of the early assembly proteins it binds 23S rRNA. One of the proteins that surrounds the polypeptide exit tunnel on the outside of the ribosome. Forms the main docking site for trigger factor binding to the ribosome. The polypeptide is Large ribosomal subunit protein uL23 (Prochlorococcus marinus (strain MIT 9215)).